The primary structure comprises 1344 residues: Regulatory-associated protein of TOR 1 (1344 aa).

Residues 28–44 (CVSSHDDGDSRRKDSEA) show a composition bias toward basic and acidic residues. Disordered regions lie at residues 28 to 56 (CVSS…GTTE) and 771 to 818 (ASTD…DSVS). Over residues 785 to 816 (SSSPLGSSGLMQGSPLSDDSSLHSDSGMMHDS) the composition is skewed to low complexity. WD repeat units lie at residues 1025 to 1064 (RFET…LLNG), 1070 to 1111 (FPDK…GKQK), 1125 to 1164 (GARD…LVRS), 1168 to 1208 (ESEC…PLVC), 1214 to 1255 (QKVE…DTYL), 1259 to 1298 (AHRG…LGII), and 1307 to 1344 (QKIG…SQAR).

The protein belongs to the WD repeat RAPTOR family. Interacts with TOR, ATPK1 and ML1. Interacts with KIN10. In terms of processing, phosphorylated by KIN10. As to expression, expressed in roots, leaves, flowers and seeds.

It is found in the cytoplasm. Probable component of the plant TOR kinase pathway that recruits substrates for TOR. Modulates plant cell growth and regulates the activity of ATPK1 kinase in response to osmotic stress. The sequence is that of Regulatory-associated protein of TOR 1 (RAPTOR1) from Arabidopsis thaliana (Mouse-ear cress).